Reading from the N-terminus, the 142-residue chain is Small ribosomal subunit protein uS12 (142 aa).

Residues 1-30 (MGKTHGMGAARKLKSHRRTQRWADKSYKKS) are disordered. Basic residues predominate over residues 11–20 (RKLKSHRRTQ). Over residues 21-30 (RWADKSYKKS) the composition is skewed to basic and acidic residues. Residue proline 61 is modified to Hydroxyproline.

The protein belongs to the universal ribosomal protein uS12 family.

The chain is Small ribosomal subunit protein uS12 (RPS23) from Euphorbia esula (Leafy spurge).